An 823-amino-acid chain; its full sequence is Zygotic DNA replication licensing factor mcm6-A (823 aa).

The segment at 159–186 (CLDCQTLVRDVEQQFKYTQPSICRNPVC) adopts a C4-type zinc-finger fold. The 208-residue stretch at 347-554 (LYHNLCTSLF…TDYAIARRIV (208 aa)) folds into the MCM domain. 397 to 404 (GDPSTAKS) contacts ATP. The Arginine finger motif lies at 529–532 (SRFD). The segment at 663 to 710 (PDVNLDQDDEHEPEDETQEGTNGDAEVPNGVNGHVNGINGHSQESNAA) is disordered. Residues 667–680 (LDQDDEHEPEDETQ) show a composition bias toward acidic residues. Over residues 691–703 (NGVNGHVNGINGH) the composition is skewed to low complexity.

It belongs to the MCM family. In terms of assembly, component of the mcm2-7 complex (RLF-M). The complex forms a toroidal hexameric ring with the proposed subunit order mcm2-mcm6-mcm4-mcm7-mcm3-mcm5 (By simililarity). Begins to associate with zmcm3, mcm4 and mcm7 into mcm complexes at the neurula stage. May replace mmcm6 in the complex that functions during licensing of DNA replication.

Its subcellular location is the nucleus. The catalysed reaction is ATP + H2O = ADP + phosphate + H(+). In terms of biological role, acts as a component of the mcm2-7 complex (mcm complex) which is the putative replicative helicase essential for 'once per cell cycle' DNA replication initiation and elongation in eukaryotic cells. The active ATPase sites in the mcm2-7 ring are formed through the interaction surfaces of two neighboring subunits such that a critical structure of a conserved arginine finger motif is provided in trans relative to the ATP-binding site of the Walker A box of the adjacent subunit. The six ATPase active sites, however, are likely to contribute differentially to the complex helicase activity. The existence of maternal and zygotic forms of mcm3 and mcm6 suggests that specific forms of mcm2-7 complexes may be used during different stages of development. May replace mmcm6 in the mcm2-7 complex. The polypeptide is Zygotic DNA replication licensing factor mcm6-A (zmcm6-a) (Xenopus laevis (African clawed frog)).